Reading from the N-terminus, the 371-residue chain is Vasopressin V2 receptor (371 aa).

The tract at residues 1–27 is disordered; that stretch reads MILVSTTSAVPGALSSPSSPSNSSQEE. Topologically, residues 1 to 38 are extracellular; sequence MILVSTTSAVPGALSSPSSPSNSSQEELLDDRDPLLVR. Low complexity predominate over residues 15 to 24; sequence SSPSSPSNSS. The N-linked (GlcNAc...) asparagine glycan is linked to Asn-22. A helical membrane pass occupies residues 39–63; that stretch reads AELALLSTIFVAVALSNGLVLGALI. At 64 to 77 the chain is on the cytoplasmic side; the sequence is RRGRRGRWAPMHVF. The helical transmembrane segment at 78–98 threads the bilayer; that stretch reads ISHLCLADLAVALFQVLPQLA. The Extracellular segment spans residues 99–113; sequence WDATDRFHGPDALCR. The helical transmembrane segment at 114–135 threads the bilayer; sequence AVKYLQMVGMYASSYMILAMTL. At 136–159 the chain is on the cytoplasmic side; that stretch reads DRHRAICRPMLAYRHGGGARWNRP. The helical transmembrane segment at 160–180 threads the bilayer; sequence VLVAWAFSLLLSLPQLFIFAQ. At 181–200 the chain is on the extracellular side; the sequence is RDVGNGSGVFDCWARFAEPW. Asn-185 carries an N-linked (GlcNAc...) asparagine glycan. The chain crosses the membrane as a helical span at residues 201–220; sequence GLRAYVTWIALMVFVAPALG. Over 221 to 271 the chain is Cytoplasmic; it reads IAACQVLIFREIHASLVPGPSERAGRRRRGHRTGSPSEGAHVSAAMAKTVR. The tract at residues 240–259 is disordered; the sequence is PSERAGRRRRGHRTGSPSEG. Residues 272 to 293 traverse the membrane as a helical segment; that stretch reads MTLVIVIVYVLCWAPFFLVQLW. At 294 to 308 the chain is on the extracellular side; that stretch reads AAWDPEAPLERPPFV. Residues 309–328 form a helical membrane-spanning segment; that stretch reads LLMLLASLNSCTNPWIYASF. Residues 329-371 lie on the Cytoplasmic side of the membrane; the sequence is SSSVSSELRSLLCCAQRHTTHSLGPQDESCATASSSLMKDTPS. S-palmitoyl cysteine attachment occurs at residues Cys-341 and Cys-342. Residues 349–371 form a disordered region; that stretch reads HSLGPQDESCATASSSLMKDTPS. Residues 357–371 show a composition bias toward polar residues; it reads SCATASSSLMKDTPS.

Belongs to the G-protein coupled receptor 1 family. Vasopressin/oxytocin receptor subfamily. Interacts with ARRDC4. Identified in a complex containing at least ARRDC4, V2R and HGS. Interacts with TMEM147. Highly expressed in kidney (at protein level) and moderately expressed in liver (at protein level). No or extremely low expression in left ventricule, muscle, bone and brain (at protein level).

It localises to the cell membrane. Its function is as follows. Receptor for arginine vasopressin. The activity of this receptor is mediated by G proteins which activate adenylate cyclase. Involved in renal water reabsorption. The chain is Vasopressin V2 receptor (Avpr2) from Mus musculus (Mouse).